The sequence spans 425 residues: C2H2 type master regulator of conidiophore development brlA (425 aa).

Disordered regions lie at residues 28–72 (MASS…RHTG), 232–257 (KTHS…PMSR), and 281–301 (VQRQ…SLSL). A compositionally biased stretch (low complexity) spans 30-44 (SSFSPMESPTPTPTS). Residues 232–256 (KTHSPTTPVRSCSLGTTSGTDTPMS) show a composition bias toward polar residues. Basic residues predominate over residues 285–294 (PSRKVARKQS). 2 C2H2-type zinc fingers span residues 321 to 345 (KGRF…PHVC) and 351 to 376 (ERAF…GRNR). The span at 365 to 374 (TKTHSKRGGR) shows a compositional bias: basic residues. Positions 365–425 (TKTHSKRGGR…RETSEEAWLE (61 aa)) are disordered.

It localises to the nucleus. In terms of biological role, brlA, abaA and wetA are pivotal regulators of conidiophore development and conidium maturation. They act individually and together to regulate their own expression and that of numerous other sporulation-specific genes. Binds promoters of target genes at brlA response elements (BREs) containing the conserved sequence 5'-(C/A)(A/G)AGGG(G/A)-3'. Also coordinates the expression of carbohydrate-active enzymes and of the key effectors of cell wall remodeling during autolysis. The chain is C2H2 type master regulator of conidiophore development brlA from Aspergillus niger (strain ATCC MYA-4892 / CBS 513.88 / FGSC A1513).